The primary structure comprises 69 residues: Small ribosomal subunit protein bS21 (69 aa).

This sequence belongs to the bacterial ribosomal protein bS21 family.

In Borrelia duttonii (strain Ly), this protein is Small ribosomal subunit protein bS21.